A 339-amino-acid chain; its full sequence is Glycerol-3-phosphate dehydrogenase [NAD(P)+] (339 aa).

4 residues coordinate NADPH: Ser15, Tyr16, His36, and Lys110. Sn-glycerol 3-phosphate contacts are provided by Lys110, Gly139, and Thr141. Ala143 lines the NADPH pocket. 5 residues coordinate sn-glycerol 3-phosphate: Lys195, Asp248, Ser258, Arg259, and Asn260. The active-site Proton acceptor is the Lys195. Arg259 provides a ligand contact to NADPH. Positions 283 and 285 each coordinate NADPH.

It belongs to the NAD-dependent glycerol-3-phosphate dehydrogenase family.

It is found in the cytoplasm. The catalysed reaction is sn-glycerol 3-phosphate + NAD(+) = dihydroxyacetone phosphate + NADH + H(+). It carries out the reaction sn-glycerol 3-phosphate + NADP(+) = dihydroxyacetone phosphate + NADPH + H(+). Its pathway is membrane lipid metabolism; glycerophospholipid metabolism. Its function is as follows. Catalyzes the reduction of the glycolytic intermediate dihydroxyacetone phosphate (DHAP) to sn-glycerol 3-phosphate (G3P), the key precursor for phospholipid synthesis. The chain is Glycerol-3-phosphate dehydrogenase [NAD(P)+] from Erwinia tasmaniensis (strain DSM 17950 / CFBP 7177 / CIP 109463 / NCPPB 4357 / Et1/99).